We begin with the raw amino-acid sequence, 130 residues long: Histone H2B.1 (130 aa).

Residues 1-19 are compositionally biased toward basic and acidic residues; it reads MAPKAEKKPASKAPAEKKP. Positions 1–39 are disordered; the sequence is MAPKAEKKPASKAPAEKKPAAKKTASATGTKKRSKTRKE. N6-acetyllysine; alternate occurs at positions 7 and 8. Residues lysine 7 and lysine 8 each participate in a glycyl lysine isopeptide (Lys-Gly) (interchain with G-Cter in SUMO); alternate cross-link. Serine 11 carries the post-translational modification Phosphoserine. At lysine 12 the chain carries N6-acetyllysine. An N6-acetyllysine; alternate modification is found at lysine 17. Lysine 17 participates in a covalent cross-link: Glycyl lysine isopeptide (Lys-Gly) (interchain with G-Cter in SUMO); alternate. Lysine 18 participates in a covalent cross-link: Glycyl lysine isopeptide (Lys-Gly) (interchain with G-Cter in SUMO). Lysine 124 participates in a covalent cross-link: Glycyl lysine isopeptide (Lys-Gly) (interchain with G-Cter in ubiquitin).

This sequence belongs to the histone H2B family. The nucleosome is a histone octamer containing two molecules each of H2A, H2B, H3 and H4 assembled in one H3-H4 heterotetramer and two H2A-H2B heterodimers. The octamer wraps approximately 147 bp of DNA. Post-translationally, monoubiquitinated by the UBC2-BRE1 complex to form H2BK123ub1. H2BK123ub1 gives a specific tag for epigenetic transcriptional activation and is also prerequisite for H3K4me and H3K79me formation. H2BK123ub1 also modulates the formation of double-strand breaks during meiosis and is a prerequisite for DNA-damage checkpoint activation. In terms of processing, phosphorylated by STE20 to form H2BS10ph during progression through meiotic prophase. May be correlated with chromosome condensation. Acetylated by GCN5 to form H2BK11ac and H2BK16ac. H2BK16ac can also be formed by ESA1. Acetylation of N-terminal lysines and particularly formation of H2BK11acK16ac has a positive effect on transcription. Post-translationally, sumoylation to form H2BK6su or H2BK7su, and probably also H2BK16su or H2BK17su, occurs preferentially near the telomeres and represses gene transcription.

It is found in the nucleus. The protein resides in the chromosome. Functionally, core component of nucleosome. Nucleosomes wrap and compact DNA into chromatin, limiting DNA accessibility to the cellular machineries which require DNA as a template. Histones thereby play a central role in transcription regulation, DNA repair, DNA replication and chromosomal stability. DNA accessibility is regulated via a complex set of post-translational modifications of histones, also called histone code, and nucleosome remodeling. This is Histone H2B.1 (HTB1) from Debaryomyces hansenii (strain ATCC 36239 / CBS 767 / BCRC 21394 / JCM 1990 / NBRC 0083 / IGC 2968) (Yeast).